The primary structure comprises 423 residues: Keratin, type I cytoskeletal 18 (423 aa).

Ser2 is modified (N-acetylserine). Residues 2–71 (SFTTRSTTFS…GLAGMGGVQT (70 aa)) are head. A phosphoserine mark is found at Ser7, Ser11, Ser16, and Ser19. Ser31 and Ser32 each carry phosphoserine; alternate. 2 O-linked (GlcNAc) serine; alternate glycosylation sites follow: Ser31 and Ser32. Residue Ser35 is modified to Phosphoserine. Tyr37 carries the phosphotyrosine modification. Ser43 is modified (phosphoserine). Arg46 carries the omega-N-methylarginine modification. Phosphoserine; alternate is present on Ser50. Residue Ser50 is glycosylated (O-linked (GlcNAc) serine; alternate). Position 52 is a phosphoserine; by MAPKAPK2 and MAPKAPK3 (Ser52). Phosphoserine occurs at positions 57 and 60. The interval 62–366 (GLAGMGGVQT…EALLNIKVKL (305 aa)) is necessary for interaction with PNN. The segment at 69 to 121 (VQTEKETMQDLNDRLASYLDKVKNLETENRRLESKIREYLEKRGPQGVRDWGH) is interaction with TRADD. Positions 72–107 (EKETMQDLNDRLASYLDKVKNLETENRRLESKIREY) are coil 1A. The region spanning 72-384 (EKETMQDLND…RLLEDGDDFS (313 aa)) is the IF rod domain. Lys73 participates in a covalent cross-link: Glycyl lysine isopeptide (Lys-Gly) (interchain with G-Cter in SUMO2). A Phosphoserine modification is found at Ser85. The linker 1 stretch occupies residues 108–125 (LEKRGPQGVRDWGHYFKT). An N6-acetyllysine modification is found at Lys124. A coil 1B region spans residues 126 to 217 (IEDLRAQIFA…KNHEEEVQGL (92 aa)). A phosphoserine mark is found at Ser137 and Ser170. Residues 218 to 241 (EAQIASSGLTVEVDAPKSQDLSKI) form a linker 12 region. Residues 236-384 (QDLSKIMADI…RLLEDGDDFS (149 aa)) form an interaction with DNAJB6 region. Lys240 is covalently cross-linked (Glycyl lysine isopeptide (Lys-Gly) (interchain with G-Cter in SUMO2)). The tract at residues 242–380 (MADIRAQYEQ…ATYRRLLEDG (139 aa)) is coil 2. Thr295 bears the Phosphothreonine mark. Residues Lys363 and Lys365 each participate in a glycyl lysine isopeptide (Lys-Gly) (interchain with G-Cter in SUMO2) cross-link. A tail region spans residues 381–423 (DDFSLNDALDSSNSMQTVQRTTTRKVVDGKVVSETNDTRVLRH). Phosphoserine is present on residues Ser384, Ser391, Ser392, and Ser394. The residue at position 397 (Thr397) is a Phosphothreonine. Lys410 participates in a covalent cross-link: Glycyl lysine isopeptide (Lys-Gly) (interchain with G-Cter in SUMO2).

This sequence belongs to the intermediate filament family. As to quaternary structure, heterotetramer of two type I and two type II keratins. KRT18 associates with KRT8. Interacts with PNN and mutated CFTR. Interacts with YWHAE, YWHAH and YWHAZ only when phosphorylated. Interacts with DNAJB6, TCHP and TRADD. Interacts with the thrombin-antithrombin complex. Interacts with FAM83H. Interacts with EPPK1. Interacts with PKP1 and PKP2. In terms of processing, phosphorylation increases by IL-6. Proteolytically cleaved by caspases during epithelial cell apoptosis. Cleavage occurs at Asp-231 by either caspase-3, caspase-6 or caspase-7. Post-translationally, dephosphorylated by ethanol. In terms of processing, O-GlcNAcylation increases solubility, and decreases stability by inducing proteasomal degradation. Expressed on the plasma membrane of hepatocytes and in the narrow apical portions of supporting cells in the vomeronasal sensory epithelium. Detected in the type III alveolar cells of the lung, in the proliferative crypt epithelium of the small intestine and in the older intragemmal cells of the tongue.

The protein localises to the nucleus matrix. The protein resides in the cytoplasm. Its subcellular location is the perinuclear region. It localises to the nucleus. It is found in the nucleolus. Functionally, when phosphorylated, plays a role in filament reorganization. Involved in the delivery of mutated CFTR to the plasma membrane. Together with KRT8, is involved in interleukin-6 (IL-6)-mediated barrier protection. Involved in the uptake of thrombin-antithrombin complexes by hepatic cells. The chain is Keratin, type I cytoskeletal 18 from Rattus norvegicus (Rat).